A 482-amino-acid chain; its full sequence is Mannose-1-phosphate guanylyltransferase 2 (482 aa).

It belongs to the mannose-6-phosphate isomerase type 2 family.

It catalyses the reaction alpha-D-mannose 1-phosphate + GTP + H(+) = GDP-alpha-D-mannose + diphosphate. Its pathway is nucleotide-sugar biosynthesis; GDP-alpha-D-mannose biosynthesis; GDP-alpha-D-mannose from alpha-D-mannose 1-phosphate (GTP route): step 1/1. In terms of biological role, involved in GDP-mannose biosynthesis which serves as the activated sugar nucleotide precursor for mannose residues in cell surface polysaccharides. This enzyme participates in synthesis of the LPS O antigen. The sequence is that of Mannose-1-phosphate guanylyltransferase 2 (manC2) from Escherichia coli O157:H7.